A 95-amino-acid chain; its full sequence is Immunogenic miracidial antigen 8C (95 aa).

The span at 1 to 15 (EFTISFSSPVISTGQ) shows a compositional bias: polar residues. The disordered stretch occupies residues 1-95 (EFTISFSSPV…PKKYGSGHKY (95 aa)). Over residues 20 to 41 (GDEDYHDGDDDVDYTDDVDDVD) the composition is skewed to acidic residues. The segment covering 45-59 (GSPSQLLQGGYQRNQ) has biased composition (polar residues).

The protein belongs to the immunogenic miracidial antigen family.

The protein is Immunogenic miracidial antigen 8C (8C) of Schistosoma japonicum (Blood fluke).